We begin with the raw amino-acid sequence, 256 residues long: Protein YIPF5 (256 aa).

At 1-125 (MSNFDNFNTD…ADGSIMNETD (125 aa)) the chain is on the cytoplasmic side. The chain crosses the membrane as a helical span at residues 126–146 (LAGPMVFCLAFGATLLLAGKI). A topological domain (lumenal) is located at residue Gln147. A helical membrane pass occupies residues 148–168 (FGYVYGISAMGCLGMYCLLNL). Topologically, residues 169–172 (MSMT) are cytoplasmic. A helical transmembrane segment spans residues 173-193 (GVSFGCVSSVLGYCLLPMIIL). Topologically, residues 194–195 (ST) are lumenal. The helical transmembrane segment at 196-216 (FAVIFSLQGILGIVLAALIIG) threads the bilayer. The Cytoplasmic portion of the chain corresponds to 217-235 (WCSFSASKIFISALAMDGQ). The chain crosses the membrane as a helical span at residues 236-256 (QLLVAYPCALLYGVFALISVF).

Belongs to the YIP1 family.

The protein resides in the endoplasmic reticulum membrane. It localises to the golgi apparatus. It is found in the cis-Golgi network membrane. Its function is as follows. Plays a role in transport between endoplasmic reticulum and Golgi. The polypeptide is Protein YIPF5 (yipf5) (Xenopus laevis (African clawed frog)).